The sequence spans 262 residues: Acyl-[acyl-carrier-protein]--UDP-N-acetylglucosamine O-acyltransferase (262 aa).

This sequence belongs to the transferase hexapeptide repeat family. LpxA subfamily. As to quaternary structure, homotrimer.

Its subcellular location is the cytoplasm. It catalyses the reaction a (3R)-hydroxyacyl-[ACP] + UDP-N-acetyl-alpha-D-glucosamine = a UDP-3-O-[(3R)-3-hydroxyacyl]-N-acetyl-alpha-D-glucosamine + holo-[ACP]. Its pathway is glycolipid biosynthesis; lipid IV(A) biosynthesis; lipid IV(A) from (3R)-3-hydroxytetradecanoyl-[acyl-carrier-protein] and UDP-N-acetyl-alpha-D-glucosamine: step 1/6. Functionally, involved in the biosynthesis of lipid A, a phosphorylated glycolipid that anchors the lipopolysaccharide to the outer membrane of the cell. The polypeptide is Acyl-[acyl-carrier-protein]--UDP-N-acetylglucosamine O-acyltransferase (Klebsiella pneumoniae (strain 342)).